The following is a 130-amino-acid chain: MGLIVYYSSATGNTEHFVSQLGQRFFKIDKKISSALVYEPYVLVVPTYADGEGRKAVPKPVIHFLNEVENRKLMRGVIGGGNRNFGRNYSLASKIIAEKCSVPCLYNFELRGTDEDVICVKKGLEKFWKQ.

This sequence belongs to the NrdI family.

Functionally, probably involved in ribonucleotide reductase function. This Bartonella bacilliformis (strain ATCC 35685 / KC583 / Herrer 020/F12,63) protein is Protein NrdI.